A 154-amino-acid chain; its full sequence is Large ribosomal subunit protein uL23z (154 aa).

It belongs to the universal ribosomal protein uL23 family.

Functionally, binds to a specific region on the 26S rRNA. This chain is Large ribosomal subunit protein uL23z (RPL23AA), found in Arabidopsis thaliana (Mouse-ear cress).